The sequence spans 193 residues: Ion-translocating oxidoreductase complex subunit A (193 aa).

6 consecutive transmembrane segments (helical) span residues 5–25, 47–67, 72–92, 102–122, 134–154, and 171–191; these read LLLF…FLGL, FVIT…LLPL, LRTM…EMVV, LLGI…VPLL, AIYG…FAGV, and SIAL…AGLV.

The protein belongs to the NqrDE/RnfAE family. The complex is composed of six subunits: RnfA, RnfB, RnfC, RnfD, RnfE and RnfG.

The protein localises to the cell inner membrane. In terms of biological role, part of a membrane-bound complex that couples electron transfer with translocation of ions across the membrane. In Erwinia tasmaniensis (strain DSM 17950 / CFBP 7177 / CIP 109463 / NCPPB 4357 / Et1/99), this protein is Ion-translocating oxidoreductase complex subunit A.